Reading from the N-terminus, the 349-residue chain is KH domain-containing, RNA-binding, signal transduction-associated protein 2 (349 aa).

A KH domain is found at 65–135; that stretch reads LIPVKQYPKF…HLSDELHVLI (71 aa). 2 disordered regions span residues 182–284 and 319–349; these read EDSG…DDQT and PEEW…YGRY. Omega-N-methylarginine occurs at positions 230 and 240. Basic and acidic residues predominate over residues 340 to 349; sequence GYREHPYGRY.

The protein belongs to the KHDRBS family. In terms of assembly, self-associates to form homooligomers. Interacts with KHDRBS1/SAM68; heterooligomer formation of KHDRBS family proteins may modulate RNA substrate specificity. Interacts with RBMX. Interacts with SAFB, SFRS9 and YTHDC1. Interacts with FYN and PLCG1 (via SH3 domain). Interacts (phosphorylated) with FYN, GRB2, PLCG1 and RASA1 (via SH2 domain). Methylated. Post-translationally, tyrosine phosphorylated by FYN, PTK6 and SRC. Tyrosine phosphorylated by SRC during mitosis. Highly expressed in brain, lung, kidney and small intestine. Weakly expressed in placenta, liver, spleen, thymus, ovary and colon.

The protein localises to the nucleus. Functionally, RNA-binding protein that plays a role in the regulation of alternative splicing and influences mRNA splice site selection and exon inclusion. Binds both poly(A) and poly(U) homopolymers. Phosphorylation by PTK6 inhibits its RNA-binding ability. Induces an increased concentration-dependent incorporation of exon in CD44 pre-mRNA by direct binding to purine-rich exonic enhancer. Can regulate alternative splicing of NRXN1 in the laminin G-like domain 6 containing the evolutionary conserved neurexin alternative spliced segment 4 (AS4) involved in neurexin selective targeting to postsynaptic partners. Regulates cell-type specific alternative splicing of NRXN1 at AS4 and acts synergystically with SAM68 in exon skipping. In contrast acts antagonistically with SAM68 in NRXN3 exon skipping at AS4. Its phosphorylation by FYN inhibits its ability to regulate splice site selection. May function as an adapter protein for Src kinases during mitosis. In Homo sapiens (Human), this protein is KH domain-containing, RNA-binding, signal transduction-associated protein 2 (KHDRBS2).